Consider the following 401-residue polypeptide: MQVSIACTEHNLKSRNGEDRLLSKQSSTAPNVVNAARAKFRTVAIIARSLGTFTPQHHISLKESTAKQTGMKYRNLGKSGLRVSCLGLGTWVTFGGQISDEVAERLMTIAYESGVNLFDTAEVYAAGKAEVILGSIIKKKGWRRSSLVITTKLYWGGKAETERGLSRKHIIEGLKGSLQRLQLEYVDVVFANRPDSNTPMEEIVRAMTHVINQGMAMYWGTSRWSAMEIMEAYSVARQFNMIPPVCEQAEYHLFQREKVEVQLPELYHKIGVGAMTWSPLACGIISGKYGNGVPESSRASLKCYQWLKERIVSEEGRKQQNKLKDLSPIAERLGCTLPQLAVAWCLRNEGVSSVLLGSSTPEQLIENLGAIQVLPKMTSHVVNEIDNILRNKPYSKKDYRS.

Residues threonine 90, tryptophan 91, glutamine 97, and aspartate 119 each contribute to the NADP(+) site. Residue tyrosine 124 is the Proton donor/acceptor of the active site. NADP(+)-binding residues include asparagine 192, serine 222, arginine 223, glutamine 248, tryptophan 277, serine 278, proline 279, leucine 280, alanine 281, cysteine 282, lysine 288, arginine 298, glycine 357, serine 359, glutamine 363, glutamate 366, and asparagine 367.

Belongs to the shaker potassium channel beta subunit family. In terms of assembly, homotetramer. Interaction with tetrameric potassium channel alpha subunits gives rise to a heterooctamer. Identified in potassium channel complexes containing KCNA1, KCNA2, KCNA4, KCNA5, KCNA6, KCNAB1 and KCNAB2. Part of a complex containing KCNA1, KCNA4 and LGI1; interaction with LGI1 inhibits down-regulation of KCNA1 channel activity. Interacts with the dimer formed by GNB1 and GNG2; this enhances KCNA1 binding. Interacts with SQSTM1.

The protein resides in the cytoplasm. It is found in the membrane. It localises to the cell membrane. It carries out the reaction a primary alcohol + NADP(+) = an aldehyde + NADPH + H(+). The catalysed reaction is a secondary alcohol + NADP(+) = a ketone + NADPH + H(+). Its function is as follows. Regulatory subunit of the voltage-gated potassium (Kv) channels composed of pore-forming and potassium-conducting alpha subunits and of regulatory beta subunits. The beta-1/KCNAB1 cytoplasmic subunit mediates closure of delayed rectifier potassium channels by physically obstructing the pore via its N-terminal domain and increases the speed of channel closure for other family members. Promotes the inactivation of KCNA1, KCNA2, KCNA4, KCNA5 and KCNA6 alpha subunit-containing channels. Displays nicotinamide adenine dinucleotide phosphate (NADPH)-dependent aldoketoreductase activity by catalyzing the NADPH-dependent reduction of a variety of endogenous aldehydes and ketones. The binding of NADPH is required for efficient down-regulation of potassium channel activity. Oxidation of the bound NADPH restrains N-terminal domain from blocking the channel, thereby decreasing N-type inactivation of potassium channel activity. The sequence is that of Voltage-gated potassium channel subunit beta-1 (KCNAB1) from Bos taurus (Bovine).